The chain runs to 175 residues: Major MR/P fimbria protein (175 aa).

The N-terminal stretch at 1–23 is a signal peptide; the sequence is MKLNKLALVLGLGLSVVAGSALA. An intrachain disulfide couples cysteine 42 to cysteine 81.

The protein belongs to the fimbrial protein family.

It is found in the fimbrium. Functionally, major structural component of mannose-resistant/proteus-like fimbriae of P.mirabilis. The protein is Major MR/P fimbria protein (mrpA) of Proteus mirabilis (strain HI4320).